A 119-amino-acid polypeptide reads, in one-letter code: Tubulin-specific chaperone A (119 aa).

It belongs to the TBCA family. As to quaternary structure, supercomplex made of cofactors A to E. Cofactors A and D function by capturing and stabilizing tubulin in a quasi-native conformation. Cofactor E binds to the cofactor D-tubulin complex; interaction with cofactor C then causes the release of tubulin polypeptides that are committed to the native state.

The protein resides in the cytoplasm. Its subcellular location is the cytoskeleton. Its function is as follows. Required for the maintenance of microtubule structures and cell polarity. Beta-tubulin-folding protein; may have a regulatory role in the tubulin-folding pathway. The chain is Tubulin-specific chaperone A (alp31) from Schizosaccharomyces pombe (strain 972 / ATCC 24843) (Fission yeast).